We begin with the raw amino-acid sequence, 458 residues long: UDP-N-acetylglucosamine 1-carboxyvinyltransferase (458 aa).

34 to 35 (KN) provides a ligand contact to phosphoenolpyruvate. Arg104 lines the UDP-N-acetyl-alpha-D-glucosamine pocket. Catalysis depends on Cys128, which acts as the Proton donor. Cys128 is modified (2-(S-cysteinyl)pyruvic acid O-phosphothioketal). UDP-N-acetyl-alpha-D-glucosamine contacts are provided by Asp320 and Val342.

The protein belongs to the EPSP synthase family. MurA subfamily.

The protein resides in the cytoplasm. It catalyses the reaction phosphoenolpyruvate + UDP-N-acetyl-alpha-D-glucosamine = UDP-N-acetyl-3-O-(1-carboxyvinyl)-alpha-D-glucosamine + phosphate. Its pathway is cell wall biogenesis; peptidoglycan biosynthesis. In terms of biological role, cell wall formation. Adds enolpyruvyl to UDP-N-acetylglucosamine. This is UDP-N-acetylglucosamine 1-carboxyvinyltransferase from Prochlorococcus marinus (strain NATL1A).